Reading from the N-terminus, the 507-residue chain is Capsid vertex component 1 (507 aa).

The interval 219–257 (AAAETSVSKHHPALENPSNIRGSAGGEGGGGRAGTGGTV) is disordered. The segment covering 241–257 (SAGGEGGGGRAGTGGTV) has biased composition (gly residues).

The protein belongs to the herpesviridae CVC1 protein family. As to quaternary structure, interacts (via C-terminus) with capsid vertex component 2/CVC2.

Its subcellular location is the virion. The protein localises to the host nucleus. Its function is as follows. Capsid vertex-specific component that plays a role during viral DNA encapsidation, assuring correct genome cleavage and presumably stabilizing capsids that contain full-length viral genomes. The polypeptide is Capsid vertex component 1 (Epstein-Barr virus (strain B95-8) (HHV-4)).